A 493-amino-acid polypeptide reads, in one-letter code: Glutamyl-tRNA(Gln) amidotransferase subunit A (493 aa).

Active-site charge relay system residues include lysine 78 and serine 158. Serine 182 (acyl-ester intermediate) is an active-site residue.

The protein belongs to the amidase family. GatA subfamily. As to quaternary structure, heterotrimer of A, B and C subunits.

The enzyme catalyses L-glutamyl-tRNA(Gln) + L-glutamine + ATP + H2O = L-glutaminyl-tRNA(Gln) + L-glutamate + ADP + phosphate + H(+). In terms of biological role, allows the formation of correctly charged Gln-tRNA(Gln) through the transamidation of misacylated Glu-tRNA(Gln) in organisms which lack glutaminyl-tRNA synthetase. The reaction takes place in the presence of glutamine and ATP through an activated gamma-phospho-Glu-tRNA(Gln). The polypeptide is Glutamyl-tRNA(Gln) amidotransferase subunit A (Rickettsia rickettsii (strain Iowa)).